The sequence spans 236 residues: Glycosylphosphatidylinositol anchor biosynthesis protein 11 (236 aa).

2 helical membrane-spanning segments follow: residues 40–60 and 65–85; these read TLTIPFHSALLIFGLYKFGLT and GVMLKGIFSLIPLQLLYGYLI. Asparagine 99 carries N-linked (GlcNAc...) asparagine glycosylation. Helical transmembrane passes span 107-127, 139-159, 184-204, and 215-235; these read LLAGGIVISLVLSVPLFVALI, ETYLLSIHLSLLIFYPSLVLY, ILLSAVLAVIGTWFGVIPIPL, and ITLLTGAYIGSFVGGIACFLF.

Belongs to the PIGF family.

Its subcellular location is the endoplasmic reticulum membrane. Its pathway is glycolipid biosynthesis; glycosylphosphatidylinositol-anchor biosynthesis. Its function is as follows. Acts in the GPI biosynthetic pathway between GlcNAc-PI synthesis and GPI transfer to protein. The chain is Glycosylphosphatidylinositol anchor biosynthesis protein 11 (GPI11) from Debaryomyces hansenii (strain ATCC 36239 / CBS 767 / BCRC 21394 / JCM 1990 / NBRC 0083 / IGC 2968) (Yeast).